The chain runs to 86 residues: UPF0213 protein OB0043 (86 aa).

One can recognise a GIY-YIG domain in the interval 3–80 (EQHYVYILRC…LPRFEKLKLI (78 aa)).

It belongs to the UPF0213 family.

The sequence is that of UPF0213 protein OB0043 from Oceanobacillus iheyensis (strain DSM 14371 / CIP 107618 / JCM 11309 / KCTC 3954 / HTE831).